A 707-amino-acid chain; its full sequence is DNA ligase (707 aa).

The segment at 1–23 is disordered; sequence MSSKATQDPEAVLAEQSDDATEA. Residues 53-57, 103-104, and glutamate 133 each bind NAD(+); these read DAEFD and SL. The active-site N6-AMP-lysine intermediate is the lysine 135. Arginine 156, glutamate 196, lysine 315, and lysine 339 together coordinate NAD(+). Zn(2+) is bound by residues cysteine 433, cysteine 436, cysteine 452, and cysteine 458. Residues 622-707 form the BRCT domain; that stretch reads SIERTLDGLS…LENGPDTPDS (86 aa).

It belongs to the NAD-dependent DNA ligase family. LigA subfamily. Mg(2+) is required as a cofactor. Requires Mn(2+) as cofactor.

The enzyme catalyses NAD(+) + (deoxyribonucleotide)n-3'-hydroxyl + 5'-phospho-(deoxyribonucleotide)m = (deoxyribonucleotide)n+m + AMP + beta-nicotinamide D-nucleotide.. Its function is as follows. DNA ligase that catalyzes the formation of phosphodiester linkages between 5'-phosphoryl and 3'-hydroxyl groups in double-stranded DNA using NAD as a coenzyme and as the energy source for the reaction. It is essential for DNA replication and repair of damaged DNA. The polypeptide is DNA ligase (Mycolicibacterium vanbaalenii (strain DSM 7251 / JCM 13017 / BCRC 16820 / KCTC 9966 / NRRL B-24157 / PYR-1) (Mycobacterium vanbaalenii)).